A 71-amino-acid polypeptide reads, in one-letter code: Sec-independent protein translocase protein TatA (71 aa).

The chain crosses the membrane as a helical span at residues 1-21; the sequence is MGASPVQLLIVLFIAVLVFGG.

This sequence belongs to the TatA/E family. As to quaternary structure, the Tat system comprises two distinct complexes: a TatABC complex, containing multiple copies of TatA, TatB and TatC subunits, and a separate TatA complex, containing only TatA subunits. Substrates initially bind to the TatABC complex, which probably triggers association of the separate TatA complex to form the active translocon.

It localises to the cell inner membrane. Functionally, part of the twin-arginine translocation (Tat) system that transports large folded proteins containing a characteristic twin-arginine motif in their signal peptide across membranes. TatA could form the protein-conducting channel of the Tat system. This Dichelobacter nodosus (strain VCS1703A) protein is Sec-independent protein translocase protein TatA.